We begin with the raw amino-acid sequence, 83 residues long: Exodeoxyribonuclease 7 small subunit (83 aa).

Belongs to the XseB family. As to quaternary structure, heterooligomer composed of large and small subunits.

Its subcellular location is the cytoplasm. The enzyme catalyses Exonucleolytic cleavage in either 5'- to 3'- or 3'- to 5'-direction to yield nucleoside 5'-phosphates.. Its function is as follows. Bidirectionally degrades single-stranded DNA into large acid-insoluble oligonucleotides, which are then degraded further into small acid-soluble oligonucleotides. This chain is Exodeoxyribonuclease 7 small subunit, found in Brucella melitensis biotype 1 (strain ATCC 23456 / CCUG 17765 / NCTC 10094 / 16M).